The primary structure comprises 171 residues: Protein phosphatase 1 regulatory subunit 1A (171 aa).

Methionine 1 is subject to N-acetylmethionine. Positions 9–12 are essential for activity; sequence KIQF. The disordered stretch occupies residues 17-171; it reads LEPHLDPEAA…PLDSQGASLV (155 aa). The segment covering 19-29 has biased composition (basic and acidic residues); sequence PHLDPEAAEQI. The residue at position 35 (threonine 35) is a Phosphothreonine; by PKA. An essential for activity region spans residues 42–54; sequence TSDQSSPEVDEDR. Phosphoserine is present on residues serine 43, serine 46, serine 47, and serine 67. Residues 122 to 133 are compositionally biased toward polar residues; it reads GSASRPDTSGTA. Residues 137–148 are compositionally biased toward basic and acidic residues; the sequence is AESKPKTQEQRG. The interval 143–171 is interaction with PPP1R15A; the sequence is TQEQRGVEPSTEDLSAHMLPLDSQGASLV.

It belongs to the protein phosphatase inhibitor 1 family. In terms of assembly, interacts with PPP1R15A. Phosphorylation of Thr-35 is required for activity.

Its function is as follows. Inhibitor of protein-phosphatase 1. This protein may be important in hormonal control of glycogen metabolism. Hormones that elevate intracellular cAMP increase I-1 activity in many tissues. I-1 activation may impose cAMP control over proteins that are not directly phosphorylated by PKA. Following a rise in intracellular calcium, I-1 is inactivated by calcineurin (or PP2B). Does not inhibit type-2 phosphatases. This chain is Protein phosphatase 1 regulatory subunit 1A (Ppp1r1a), found in Rattus norvegicus (Rat).